The primary structure comprises 250 residues: MLAKRIIPCLDVKDGKTVKGVNFINFRDAGDPVALAAEYSRKGADEIVFLDITASHEKRKTLTDLARRVAAEVNIPFTIGGGVRELEDVSALLAAGADKVSLNSSALKNPNFITEIAKNFGSQVCVCAIDAKENNGKWTCYLNGGRIDTGKDLFVWAKEAENLGAGEILFTSMNHDGVKTGFANEALAKLGQIVNIPVIASGGAGSKEHFKDVFLLGHADAALAASVFHFGEIDISELKTYLRGNRIVVR.

Residues Asp11 and Asp130 contribute to the active site.

Belongs to the HisA/HisF family. Heterodimer of HisH and HisF.

It localises to the cytoplasm. It carries out the reaction 5-[(5-phospho-1-deoxy-D-ribulos-1-ylimino)methylamino]-1-(5-phospho-beta-D-ribosyl)imidazole-4-carboxamide + L-glutamine = D-erythro-1-(imidazol-4-yl)glycerol 3-phosphate + 5-amino-1-(5-phospho-beta-D-ribosyl)imidazole-4-carboxamide + L-glutamate + H(+). It functions in the pathway amino-acid biosynthesis; L-histidine biosynthesis; L-histidine from 5-phospho-alpha-D-ribose 1-diphosphate: step 5/9. Functionally, IGPS catalyzes the conversion of PRFAR and glutamine to IGP, AICAR and glutamate. The HisF subunit catalyzes the cyclization activity that produces IGP and AICAR from PRFAR using the ammonia provided by the HisH subunit. In Elusimicrobium minutum (strain Pei191), this protein is Imidazole glycerol phosphate synthase subunit HisF.